A 388-amino-acid polypeptide reads, in one-letter code: Succinate--CoA ligase [ADP-forming] subunit beta (388 aa).

Residues 9–244 (KSLFAEYGLP…PSQDDAREAH (236 aa)) form the ATP-grasp domain. ATP is bound by residues Lys-46, 53-55 (GRG), Glu-99, Thr-102, and Glu-107. The Mg(2+) site is built by Asn-199 and Asp-213. Substrate contacts are provided by residues Asn-264 and 321–323 (GIV).

Belongs to the succinate/malate CoA ligase beta subunit family. In terms of assembly, heterotetramer of two alpha and two beta subunits. The cofactor is Mg(2+).

The catalysed reaction is succinate + ATP + CoA = succinyl-CoA + ADP + phosphate. It carries out the reaction GTP + succinate + CoA = succinyl-CoA + GDP + phosphate. Its pathway is carbohydrate metabolism; tricarboxylic acid cycle; succinate from succinyl-CoA (ligase route): step 1/1. Its function is as follows. Succinyl-CoA synthetase functions in the citric acid cycle (TCA), coupling the hydrolysis of succinyl-CoA to the synthesis of either ATP or GTP and thus represents the only step of substrate-level phosphorylation in the TCA. The beta subunit provides nucleotide specificity of the enzyme and binds the substrate succinate, while the binding sites for coenzyme A and phosphate are found in the alpha subunit. In Shewanella woodyi (strain ATCC 51908 / MS32), this protein is Succinate--CoA ligase [ADP-forming] subunit beta.